We begin with the raw amino-acid sequence, 466 residues long: GATA-binding factor 2 (466 aa).

Low complexity-rich tracts occupy residues 139–155 and 174–188; these read GSST…TPAS and PDPN…SSSA. A disordered region spans residues 139 to 196; that stretch reads GSSTSSTASVSSLTPASHSGSHLFGFPPTPPKEVSPDPNSTSAASPSSSAGARQEDKD. 2 consecutive GATA-type zinc fingers follow at residues 281-305 and 335-359; these read CVNC…CNAC and CANC…CNAC. Residues 436-466 are disordered; the sequence is GHILPTPTPIHPSSSISFGHPHPSSMVTAMG.

As to expression, expressed in all developmental stages of erythroid cells but is additionally found in a limited subset of other tissues.

It is found in the nucleus. Functionally, transcriptional activator which probably serves as a general switch factor for cell-specific development. It binds to DNA sites with the consensus sequence 5'-[AT]GATA[AG]-3' within regulatory regions of genes. The chain is GATA-binding factor 2 (GATA2) from Gallus gallus (Chicken).